Reading from the N-terminus, the 216-residue chain is Adenylate kinase (216 aa).

10 to 15 serves as a coordination point for ATP; sequence GAGKGT. The NMP stretch occupies residues 30–59; sequence STGDMLRAAVKAGTPLGLELKKVMDAGQLV. Residues threonine 31, arginine 36, 57–59, 85–88, and glutamine 92 each bind AMP; these read QLV and GFPR. Residues 122 to 159 are LID; sequence GRRVHLASGRTYHIQYNPPKVEGKDDETGEDLIQRDDD. Residues arginine 123 and 132-133 each bind ATP; that span reads TY. Residues arginine 156 and arginine 167 each contribute to the AMP site. An ATP-binding site is contributed by glycine 202.

This sequence belongs to the adenylate kinase family. Monomer.

The protein localises to the cytoplasm. It catalyses the reaction AMP + ATP = 2 ADP. It functions in the pathway purine metabolism; AMP biosynthesis via salvage pathway; AMP from ADP: step 1/1. In terms of biological role, catalyzes the reversible transfer of the terminal phosphate group between ATP and AMP. Plays an important role in cellular energy homeostasis and in adenine nucleotide metabolism. This chain is Adenylate kinase, found in Pseudomonas putida (strain ATCC 700007 / DSM 6899 / JCM 31910 / BCRC 17059 / LMG 24140 / F1).